The sequence spans 43 residues: Bacteriocin leucocin-C (43 aa).

Cys-9 and Cys-14 are joined by a disulfide.

It localises to the secreted. Functionally, inhibits a wide spectrum of lactic acid bacteria. This Leuconostoc mesenteroides protein is Bacteriocin leucocin-C.